The chain runs to 454 residues: Growth/differentiation factor 6 (454 aa).

Positions 1 to 22 are cleaved as a signal peptide; the sequence is MDTPRVLLWAIFLISFLWDLPG. The propeptide occupies 23-334; it reads FQQASISSSS…LPSPGRRRRR (312 aa). The disordered stretch occupies residues 28 to 93; it reads ISSSSSSSTE…QGQEPPGRGL (66 aa). 2 stretches are compositionally biased toward basic and acidic residues: residues 39-52 and 60-73; these read DSTK…EGKM and AEGR…LRQK. Residues 81-92 are compositionally biased toward low complexity; sequence GQHQGQEPPGRG. The N-linked (GlcNAc...) asparagine glycan is linked to asparagine 117. Disordered stretches follow at residues 247–268 and 303–350; these read DTGA…SLGF and AEAA…KKSR. A compositionally biased stretch (low complexity) spans 303–319; that stretch reads AEAAGAEGSWPAPSGSP. A compositionally biased stretch (basic residues) spans 329-350; it reads GRRRRRTAFASRHGKRHGKKSR. Intrachain disulfides connect cysteine 353-cysteine 419, cysteine 382-cysteine 451, and cysteine 386-cysteine 453.

Belongs to the TGF-beta family. Homodimer; disulfide-linked. As to expression, expressed in different subsets of developing joints. Highly expressed in the cochlea.

It is found in the secreted. Growth factor that controls proliferation and cellular differentiation in the retina and bone formation. Plays a key role in regulating apoptosis during retinal development. Establishes dorsal-ventral positional information in the retina and controls the formation of the retinotectal map. Required for normal formation of bones and joints in the limbs, skull, digits and axial skeleton. Plays a key role in establishing boundaries between skeletal elements during development. Regulation of GDF6 expression seems to be a mechanism for evolving species-specific changes in skeletal structures. Seems to positively regulate differentiation of chondrogenic tissue through the growth factor receptors subunits BMPR1A, BMPR1B, BMPR2 and ACVR2A, leading to the activation of SMAD1-SMAD5-SMAD8 complex. The regulation of chondrogenic differentiation is inhibited by NOG. Also involved in the induction of adipogenesis from mesenchymal stem cells. This mechanism acts through the growth factor receptors subunits BMPR1A, BMPR2 and ACVR2A and the activation of SMAD1-SMAD5-SMAD8 complex and MAPK14/p38. In Mus musculus (Mouse), this protein is Growth/differentiation factor 6 (Gdf6).